We begin with the raw amino-acid sequence, 447 residues long: UDP-glycosyltransferase 76E3 (447 aa).

UDP-alpha-D-glucose is bound by residues serine 269, 328–330 (APQ), 345–353 (HCGWNSTLE), and 367–370 (QGEQ).

The protein belongs to the UDP-glycosyltransferase family.

This chain is UDP-glycosyltransferase 76E3 (UGT76E3), found in Arabidopsis thaliana (Mouse-ear cress).